A 448-amino-acid chain; its full sequence is Signal recognition particle 54 kDa protein (448 aa).

Residues 107–114 (GIQGSGKT), 189–193 (DSAGR), and 247–250 (TKLD) contribute to the GTP site.

The protein belongs to the GTP-binding SRP family. SRP54 subfamily. As to quaternary structure, part of the signal recognition particle protein translocation system, which is composed of SRP and FtsY. Archaeal SRP consists of a 7S RNA molecule of 300 nucleotides and two protein subunits: SRP54 and SRP19.

It is found in the cytoplasm. The catalysed reaction is GTP + H2O = GDP + phosphate + H(+). In terms of biological role, involved in targeting and insertion of nascent membrane proteins into the cytoplasmic membrane. Binds to the hydrophobic signal sequence of the ribosome-nascent chain (RNC) as it emerges from the ribosomes. The SRP-RNC complex is then targeted to the cytoplasmic membrane where it interacts with the SRP receptor FtsY. The polypeptide is Signal recognition particle 54 kDa protein (Thermococcus kodakarensis (strain ATCC BAA-918 / JCM 12380 / KOD1) (Pyrococcus kodakaraensis (strain KOD1))).